We begin with the raw amino-acid sequence, 366 residues long: Alanine racemase (366 aa).

Catalysis depends on Lys-33, which acts as the Proton acceptor; specific for D-alanine. Lys-33 is subject to N6-(pyridoxal phosphate)lysine. Arg-129 contributes to the substrate binding site. Residue Tyr-253 is the Proton acceptor; specific for L-alanine of the active site. Position 301 (Met-301) interacts with substrate.

The protein belongs to the alanine racemase family. It depends on pyridoxal 5'-phosphate as a cofactor.

It carries out the reaction L-alanine = D-alanine. It participates in amino-acid biosynthesis; D-alanine biosynthesis; D-alanine from L-alanine: step 1/1. Its function is as follows. Catalyzes the interconversion of L-alanine and D-alanine. May also act on other amino acids. In Xanthomonas axonopodis pv. citri (strain 306), this protein is Alanine racemase (alr).